We begin with the raw amino-acid sequence, 183 residues long: Oligoribonuclease (183 aa).

In terms of domain architecture, Exonuclease spans 9 to 172 (LIWIDLEMTG…DDIRESIEEL (164 aa)). Tyrosine 130 is a catalytic residue.

It belongs to the oligoribonuclease family.

It localises to the cytoplasm. Functionally, 3'-to-5' exoribonuclease specific for small oligoribonucleotides. The polypeptide is Oligoribonuclease (Haemophilus ducreyi (strain 35000HP / ATCC 700724)).